Consider the following 410-residue polypeptide: Probable protein S-acyltransferase 6 (410 aa).

Helical transmembrane passes span 45–65 (LGLT…FVAS) and 76–96 (GVSI…LLML). Positions 108 to 129 (NSHPPEPEVVDGNTGSGTSQTP) are disordered. The DHHC domain occupies 147 to 197 (KYCDTCMLYRPPRCSHCSICNNCVERFDHHCPWVGQCIAQRNYRFFFMFVF). The S-palmitoyl cysteine intermediate role is filled by cysteine 177. The next 2 membrane-spanning stretches (helical) occupy residues 191–211 (FFFM…AFCC) and 235–255 (SIAL…LTCF). At serine 325 the chain carries Phosphoserine.

Belongs to the DHHC palmitoyltransferase family.

It is found in the cell membrane. The enzyme catalyses L-cysteinyl-[protein] + hexadecanoyl-CoA = S-hexadecanoyl-L-cysteinyl-[protein] + CoA. Its function is as follows. Palmitoyl acyltransferase. The sequence is that of Probable protein S-acyltransferase 6 (PAT06) from Arabidopsis thaliana (Mouse-ear cress).